The chain runs to 450 residues: tRNA modification GTPase MnmE (450 aa).

Positions 23, 79, and 118 each coordinate (6S)-5-formyl-5,6,7,8-tetrahydrofolate. A TrmE-type G domain is found at 214 to 374 (GITLILVGKP…LKEHILNKVG (161 aa)). N224 is a binding site for K(+). Residues 224 to 229 (NAGKSS), 243 to 249 (TSIAGTT), and 268 to 271 (DTAG) contribute to the GTP site. Mg(2+) is bound at residue S228. T243, I245, and T248 together coordinate K(+). T249 is a Mg(2+) binding site. K450 serves as a coordination point for (6S)-5-formyl-5,6,7,8-tetrahydrofolate.

Belongs to the TRAFAC class TrmE-Era-EngA-EngB-Septin-like GTPase superfamily. TrmE GTPase family. As to quaternary structure, homodimer. Heterotetramer of two MnmE and two MnmG subunits. K(+) is required as a cofactor.

Its subcellular location is the cytoplasm. Its function is as follows. Exhibits a very high intrinsic GTPase hydrolysis rate. Involved in the addition of a carboxymethylaminomethyl (cmnm) group at the wobble position (U34) of certain tRNAs, forming tRNA-cmnm(5)s(2)U34. This chain is tRNA modification GTPase MnmE, found in Francisella tularensis subsp. tularensis (strain FSC 198).